Here is a 380-residue protein sequence, read N- to C-terminus: Putative 8-amino-7-oxononanoate synthase (380 aa).

Arginine 18 serves as a coordination point for substrate. Position 106-107 (106-107) interacts with pyridoxal 5'-phosphate; that stretch reads GY. A substrate-binding site is contributed by histidine 131. Residues serine 179, 205–208, and 236–239 each bind pyridoxal 5'-phosphate; these read DEAH and TFGK. Lysine 239 carries the N6-(pyridoxal phosphate)lysine modification. Substrate is bound at residue threonine 352.

Belongs to the class-II pyridoxal-phosphate-dependent aminotransferase family. BioF subfamily. In terms of assembly, homodimer. Requires pyridoxal 5'-phosphate as cofactor.

It catalyses the reaction 6-carboxyhexanoyl-[ACP] + L-alanine + H(+) = (8S)-8-amino-7-oxononanoate + holo-[ACP] + CO2. The protein operates within cofactor biosynthesis; biotin biosynthesis. In terms of biological role, catalyzes the decarboxylative condensation of pimeloyl-[acyl-carrier protein] and L-alanine to produce 8-amino-7-oxononanoate (AON), [acyl-carrier protein], and carbon dioxide. In Neisseria meningitidis serogroup B (strain ATCC BAA-335 / MC58), this protein is Putative 8-amino-7-oxononanoate synthase (bioF).